The following is a 764-amino-acid chain: Probable 5-methyltetrahydropteroyltriglutamate--homocysteine methyltransferase (764 aa).

Residues Lys19 and Asn126 each coordinate 5-methyltetrahydropteroyltri-L-glutamate. Ser182 carries the post-translational modification Phosphoserine. At Thr441 the chain carries Phosphothreonine. Residues Ile442–Ser444 and Glu495 contribute to the L-homocysteine site. Residues Ile442–Ser444 and Glu495 each bind L-methionine. 5-methyltetrahydropteroyltri-L-glutamate-binding positions include Asp500, Tyr523, Arg526–Cys527, and Trp572. Asp610 lines the L-homocysteine pocket. Asp610 lines the L-methionine pocket. Residues His652, Cys654, and Glu676 each contribute to the Zn(2+) site. His703 (proton donor) is an active-site residue. Position 735 (Cys735) interacts with Zn(2+).

It belongs to the vitamin-B12 independent methionine synthase family. Requires Zn(2+) as cofactor.

Its subcellular location is the nucleus. It is found in the cytoplasm. It carries out the reaction 5-methyltetrahydropteroyltri-L-glutamate + L-homocysteine = tetrahydropteroyltri-L-glutamate + L-methionine. The protein operates within amino-acid biosynthesis; L-methionine biosynthesis via de novo pathway; L-methionine from L-homocysteine (MetE route): step 1/1. Its function is as follows. Catalyzes the transfer of a methyl group from 5-methyltetrahydrofolate to homocysteine resulting in methionine formation. The chain is Probable 5-methyltetrahydropteroyltriglutamate--homocysteine methyltransferase (met26) from Schizosaccharomyces pombe (strain 972 / ATCC 24843) (Fission yeast).